A 507-amino-acid chain; its full sequence is Keratin, type II cuticular Hb5 (507 aa).

Residues 1-123 (MSCRSYRISS…PNAQCVKQEE (123 aa)) are head. Residues 123–434 (EKEQIKSLNS…RLLEGEEHRL (312 aa)) enclose the IF rod domain. The segment at 124-158 (KEQIKSLNSRFAAFIDKVRFLEQQNKLLETKWQFY) is coil 1A. A linker 1 region spans residues 159-168 (QNQRCCESNL). The interval 169-269 (EPLFSGYIET…YEEEIRVLQA (101 aa)) is coil 1B. A Glycyl lysine isopeptide (Lys-Gly) (interchain with G-Cter in SUMO1) cross-link involves residue K229. Positions 270–286 (HISDTSVIVKMDNSRDL) are linker 12. Residues 287-430 (NMDCIIAEIK…ATYRRLLEGE (144 aa)) are coil 2. The tract at residues 431-507 (EHRLCEGVGS…CGSSRSVRFA (77 aa)) is tail.

This sequence belongs to the intermediate filament family. As to quaternary structure, heterotetramer of two type I and two type II keratins. Synthesis occurs immediately above a small population of matrix cells at the base of the hair bulb and the trichocytes lining the dermal papilla and extends upward through the matrix and ends in the lower part of the cortex of the hair shaft.

This is Keratin, type II cuticular Hb5 (KRT85) from Homo sapiens (Human).